We begin with the raw amino-acid sequence, 370 residues long: Vasopressin V2 receptor (370 aa).

Over residues 1 to 10 the composition is skewed to polar residues; the sequence is MLLASTTSAV. The tract at residues 1 to 26 is disordered; that stretch reads MLLASTTSAVPRTLSPPTPAGNGSRE. The Extracellular segment spans residues 1 to 37; sequence MLLASTTSAVPRTLSPPTPAGNGSRELLDTRDPLLVQ. N-linked (GlcNAc...) asparagine glycosylation is present at N22. Residues 38-62 traverse the membrane as a helical segment; that stretch reads AELALLSTVFVAVALSNGLVLGALA. The Cytoplasmic portion of the chain corresponds to 63–76; the sequence is RRVRRGRWAPMHVF. Residues 77 to 97 form a helical membrane-spanning segment; it reads IGHLCLADLAVALFQVLPQLA. Topologically, residues 98-112 are extracellular; the sequence is WDATDRFRGPDALCR. A helical membrane pass occupies residues 113-134; that stretch reads AVKYLQMVGMYASSYMILAMTL. The Cytoplasmic segment spans residues 135-158; it reads DRHRAICRPMLAYRHGGGARWNRP. The chain crosses the membrane as a helical span at residues 159 to 179; it reads VLVAWAFSLILSLPQLFIFAQ. Residues 180 to 199 lie on the Extracellular side of the membrane; the sequence is RDVGNGSGVLDCWAHFAEPW. Residues 200–219 traverse the membrane as a helical segment; that stretch reads GLRAYVTWIALMVFVAPALG. Over 220 to 270 the chain is Cytoplasmic; the sequence is IAACQVLIFREIHSSLVPGPAERAGGCRGGHRTGSPSEGARVSAAMAKTVR. The chain crosses the membrane as a helical span at residues 271–292; the sequence is MTLVIVIVYVLCWAPFFLVQLW. The Extracellular segment spans residues 293–307; it reads AAWDPQAPLEGAPFV. Residues 308 to 327 traverse the membrane as a helical segment; that stretch reads LLMLLASLNSCTNPWIYAFF. Over 328–370 the chain is Cytoplasmic; it reads SSSVSSELRSLFCWARSRAPPSLGPQEESCATASSFLAKDTSS. A lipid anchor (S-palmitoyl cysteine) is attached at C340.

The protein belongs to the G-protein coupled receptor 1 family. Vasopressin/oxytocin receptor subfamily. Interacts with ARRDC4. Identified in a complex containing at least ARRDC4, V2R and HGS. Interacts with TMEM147.

The protein resides in the cell membrane. Receptor for arginine vasopressin. The activity of this receptor is mediated by G proteins which activate adenylate cyclase. Involved in renal water reabsorption. The protein is Vasopressin V2 receptor (AVPR2) of Canis lupus familiaris (Dog).